The sequence spans 340 residues: Putative RRN3-like protein RRN3P2 (340 aa).

The protein belongs to the RRN3 family.

In Homo sapiens (Human), this protein is Putative RRN3-like protein RRN3P2 (RRN3P2).